Reading from the N-terminus, the 124-residue chain is Fluoride-specific ion channel FluC (124 aa).

Helical transmembrane passes span 3–23 (VLLIFLGCGAGGVARYGVSNL), 34–54 (IGTLIVNITGSLLMGILFIFI), 68–88 (LLLIGFLGGYTTFSSFSIETF), and 100–120 (ALNVLLSVALCIAGAWLGVLI). Na(+)-binding residues include glycine 75 and threonine 78.

This sequence belongs to the fluoride channel Fluc/FEX (TC 1.A.43) family.

Its subcellular location is the cell inner membrane. It carries out the reaction fluoride(in) = fluoride(out). Na(+) is not transported, but it plays an essential structural role and its presence is essential for fluoride channel function. Its function is as follows. Fluoride-specific ion channel. Important for reducing fluoride concentration in the cell, thus reducing its toxicity. The chain is Fluoride-specific ion channel FluC from Coxiella burnetii (strain CbuK_Q154) (Coxiella burnetii (strain Q154)).